Reading from the N-terminus, the 160-residue chain is Crossover junction endodeoxyribonuclease RuvC (160 aa).

Active-site residues include Asp9, Glu68, and Asp141. The Mg(2+) site is built by Asp9, Glu68, and Asp141.

This sequence belongs to the RuvC family. In terms of assembly, homodimer which binds Holliday junction (HJ) DNA. The HJ becomes 2-fold symmetrical on binding to RuvC with unstacked arms; it has a different conformation from HJ DNA in complex with RuvA. In the full resolvosome a probable DNA-RuvA(4)-RuvB(12)-RuvC(2) complex forms which resolves the HJ. Mg(2+) is required as a cofactor.

It is found in the cytoplasm. It catalyses the reaction Endonucleolytic cleavage at a junction such as a reciprocal single-stranded crossover between two homologous DNA duplexes (Holliday junction).. In terms of biological role, the RuvA-RuvB-RuvC complex processes Holliday junction (HJ) DNA during genetic recombination and DNA repair. Endonuclease that resolves HJ intermediates. Cleaves cruciform DNA by making single-stranded nicks across the HJ at symmetrical positions within the homologous arms, yielding a 5'-phosphate and a 3'-hydroxyl group; requires a central core of homology in the junction. The consensus cleavage sequence is 5'-(A/T)TT(C/G)-3'. Cleavage occurs on the 3'-side of the TT dinucleotide at the point of strand exchange. HJ branch migration catalyzed by RuvA-RuvB allows RuvC to scan DNA until it finds its consensus sequence, where it cleaves and resolves the cruciform DNA. The protein is Crossover junction endodeoxyribonuclease RuvC of Campylobacter jejuni subsp. jejuni serotype O:23/36 (strain 81-176).